Here is a 282-residue protein sequence, read N- to C-terminus: Energy-coupling factor transporter ATP-binding protein EcfA1 (282 aa).

The region spanning 6–243 (ISFDHVTFTY…VEMLKRIGLD (238 aa)) is the ABC transporter domain. 40–47 (GHNGSGKS) contributes to the ATP binding site.

This sequence belongs to the ABC transporter superfamily. Energy-coupling factor EcfA family. As to quaternary structure, forms a stable energy-coupling factor (ECF) transporter complex composed of 2 membrane-embedded substrate-binding proteins (S component), 2 ATP-binding proteins (A component) and 2 transmembrane proteins (T component).

The protein localises to the cell membrane. Functionally, ATP-binding (A) component of a common energy-coupling factor (ECF) ABC-transporter complex. Unlike classic ABC transporters this ECF transporter provides the energy necessary to transport a number of different substrates. The polypeptide is Energy-coupling factor transporter ATP-binding protein EcfA1 (Lactobacillus delbrueckii subsp. bulgaricus (strain ATCC 11842 / DSM 20081 / BCRC 10696 / JCM 1002 / NBRC 13953 / NCIMB 11778 / NCTC 12712 / WDCM 00102 / Lb 14)).